A 250-amino-acid chain; its full sequence is 3-deoxy-manno-octulosonate cytidylyltransferase (250 aa).

This sequence belongs to the KdsB family.

It is found in the cytoplasm. It carries out the reaction 3-deoxy-alpha-D-manno-oct-2-ulosonate + CTP = CMP-3-deoxy-beta-D-manno-octulosonate + diphosphate. It participates in nucleotide-sugar biosynthesis; CMP-3-deoxy-D-manno-octulosonate biosynthesis; CMP-3-deoxy-D-manno-octulosonate from 3-deoxy-D-manno-octulosonate and CTP: step 1/1. Its pathway is bacterial outer membrane biogenesis; lipopolysaccharide biosynthesis. Functionally, activates KDO (a required 8-carbon sugar) for incorporation into bacterial lipopolysaccharide in Gram-negative bacteria. This Legionella pneumophila (strain Corby) protein is 3-deoxy-manno-octulosonate cytidylyltransferase.